A 413-amino-acid chain; its full sequence is Glycosyl hydrolase family 109 protein 2 (413 aa).

NAD(+) is bound by residues 26-27 (NR), D48, 96-99 (WLTH), 116-117 (EV), and N145. Y174 provides a ligand contact to substrate. Residues 191-195 (YHNHW) and Y208 each bind NAD(+). Substrate contacts are provided by residues 208 to 211 (YPTH) and Y290.

Belongs to the Gfo/Idh/MocA family. Glycosyl hydrolase 109 subfamily. It depends on NAD(+) as a cofactor.

Glycosidase. In Phocaeicola vulgatus (strain ATCC 8482 / DSM 1447 / JCM 5826 / CCUG 4940 / NBRC 14291 / NCTC 11154) (Bacteroides vulgatus), this protein is Glycosyl hydrolase family 109 protein 2.